The sequence spans 129 residues: ATP synthase epsilon chain (129 aa).

This sequence belongs to the ATPase epsilon chain family. As to quaternary structure, F-type ATPases have 2 components, CF(1) - the catalytic core - and CF(0) - the membrane proton channel. CF(1) has five subunits: alpha(3), beta(3), gamma(1), delta(1), epsilon(1). CF(0) has three main subunits: a, b and c.

The protein localises to the cell inner membrane. In terms of biological role, produces ATP from ADP in the presence of a proton gradient across the membrane. This Nitratiruptor sp. (strain SB155-2) protein is ATP synthase epsilon chain.